The primary structure comprises 241 residues: NAD(P)H-quinone oxidoreductase subunit K (241 aa).

[4Fe-4S] cluster contacts are provided by C60, C61, C125, and C156. The segment at 220 to 241 is disordered; sequence SSQKEKITELPEKTEITNTEKD. Basic and acidic residues predominate over residues 222–241; that stretch reads QKEKITELPEKTEITNTEKD.

This sequence belongs to the complex I 20 kDa subunit family. NDH-1 can be composed of about 15 different subunits; different subcomplexes with different compositions have been identified which probably have different functions. It depends on [4Fe-4S] cluster as a cofactor.

Its subcellular location is the cellular thylakoid membrane. It catalyses the reaction a plastoquinone + NADH + (n+1) H(+)(in) = a plastoquinol + NAD(+) + n H(+)(out). The enzyme catalyses a plastoquinone + NADPH + (n+1) H(+)(in) = a plastoquinol + NADP(+) + n H(+)(out). In terms of biological role, NDH-1 shuttles electrons from an unknown electron donor, via FMN and iron-sulfur (Fe-S) centers, to quinones in the respiratory and/or the photosynthetic chain. The immediate electron acceptor for the enzyme in this species is believed to be plastoquinone. Couples the redox reaction to proton translocation, and thus conserves the redox energy in a proton gradient. Cyanobacterial NDH-1 also plays a role in inorganic carbon-concentration. The sequence is that of NAD(P)H-quinone oxidoreductase subunit K from Prochlorococcus marinus (strain MIT 9215).